The primary structure comprises 52 residues: uncharacterized protein (52 aa).

2 helical membrane passes run 4–24 (IIIPAILAIFALWILLQISLE) and 25–45 (MSIVKNPMNYFIVFIIFFLFV).

The protein resides in the cell membrane. This is an uncharacterized protein from Bacillus subtilis (strain 168).